The chain runs to 193 residues: Ion-translocating oxidoreductase complex subunit A (193 aa).

The next 6 helical transmembrane spans lie at 5–25 (LLLF…FLGL), 39–59 (MGMG…AWLI), 63–83 (ILIP…VIAV), 102–122 (LLGI…VALL), 134–154 (ALYG…FTAI), and 171–191 (AIAL…SGLV).

This sequence belongs to the NqrDE/RnfAE family. As to quaternary structure, the complex is composed of six subunits: RsxA, RsxB, RsxC, RsxD, RsxE and RsxG.

The protein resides in the cell inner membrane. Functionally, part of a membrane-bound complex that couples electron transfer with translocation of ions across the membrane. Required to maintain the reduced state of SoxR. This Shigella boydii serotype 4 (strain Sb227) protein is Ion-translocating oxidoreductase complex subunit A.